A 2293-amino-acid polypeptide reads, in one-letter code: Protein Ycf2 (2293 aa).

1647 to 1654 lines the ATP pocket; it reads GSIGTGRS.

Belongs to the Ycf2 family.

The protein localises to the plastid. It is found in the chloroplast stroma. Probable ATPase of unknown function. Its presence in a non-photosynthetic plant (Epifagus virginiana) and experiments in tobacco indicate that it has an essential function which is probably not related to photosynthesis. This is Protein Ycf2 from Lobularia maritima (Sweet alyssum).